The chain runs to 593 residues: MSVSLSFAASATFGFRGGLGGFSRPAAAIKQWRCLPRIQCHSAEQSQSPLRRSGNYQPSIWTHDRIQSLTLSHTADEDDHGERIKLLKCQTNKLMEEKKGEVGEQLQLIDHLQQLGVAYHFKDEIKDTLRGFYASFEDISLQFKDNLHASALLFRLLRENGFSVSEDIFKKFKDDQKGQFEDRLQSQAEGLLSLYEASYLEKDGEELLHEAREFTTKHLKNLLEEEGSLKPGLIREQVAYALELPLNRRFQRLHTKWFIGAWQRDPTMDPALLLLAKLDFNALQNMYKRELNEVSRWWTDLGLPQKLPFFRDRLTENYLWAVVFAFEPDSWAFREMDTKTNCFITMIDDVYDVYGTLDELELFTDIMERWDVNAIDKLPEYMKICFLAVFNTVNDAGYEVMRDKGVNIIPYLKRAWAELCKMYMREARWYHTGYTPTLDEYLDGAWISISGALILSTAYCMGKDLTKEDLDKFSTYPSIVQPSCMLLRLHDDFGTSTEELARGDVQKAVQCCMHERKVPEAVAREHIKQVMEAKWRVLNGNRVAASSFEEYFQNVAINLPRAAQFFYGKGDGYANADGETQKQVMSLLIEPVQ.

The N-terminal 39 residues, 1-39 (MSVSLSFAASATFGFRGGLGGFSRPAAAIKQWRCLPRIQ), are a transit peptide targeting the chloroplast. 4 residues coordinate Mg(2+): Asp348, Asp352, Asp491, and Glu499. The short motif at 348–352 (DDVYD) is the DDXXD motif element.

It belongs to the terpene synthase family. Tpsa subfamily. Mg(2+) is required as a cofactor. It depends on Mn(2+) as a cofactor. Highly expressed in flowers, petals and sepals, but almost undetectable in vegetative organs.

The protein resides in the plastid. Its subcellular location is the chloroplast. It catalyses the reaction (2E)-geranyl diphosphate = sabinene + diphosphate. The enzyme catalyses (2E)-geranyl diphosphate = terpinolene + diphosphate. It carries out the reaction (2E)-geranyl diphosphate = alpha-pinene + diphosphate. The catalysed reaction is (2E)-geranyl diphosphate = beta-pinene + diphosphate. It catalyses the reaction (2E)-geranyl diphosphate = beta-myrcene + diphosphate. The enzyme catalyses (2E)-geranyl diphosphate = alpha-terpinene + diphosphate. It carries out the reaction (2E)-geranyl diphosphate = beta-phellandrene + diphosphate. The catalysed reaction is (2E)-geranyl diphosphate = gamma-terpinene + diphosphate. Its pathway is secondary metabolite biosynthesis; terpenoid biosynthesis. Its function is as follows. Monoterpene synthase involved in the biosynthesis of volatile compounds present in floral scent. Mediates the conversion of (2E)-geranyl diphosphate (GPP) into sabinene and sub-products such as alpha-thujene, alpha-pinene, beta-pinene, myrcene, alpha-phellandrene, alpha-terpinene, beta-phellandrene, gamma-terpinene and terpinolene. Unable to use farnesyl diphosphate (FPP) as substrate. This Hedychium coronarium (White butterfly ginger-lily) protein is Monoterpene synthase 7, chloroplastic.